The sequence spans 526 residues: Cytochrome P450 monooxygeanse terK (526 aa).

A helical membrane pass occupies residues 21-43; it reads NWGQLTGALLFLAACTWIYLPAF. Position 465 (cysteine 465) interacts with heme.

Belongs to the cytochrome P450 family. Requires heme as cofactor.

Its subcellular location is the membrane. Its pathway is secondary metabolite biosynthesis. Cytochrome P450 monooxygeanse; part of the gene cluster that mediates the biosynthesis of terpendoles, indole-diterpene (IDT) mycotoxins including terpendole I, terpendole K, terpendole C, as well as the kinesin Eg5 inhibitor terpendole E. Terpendoles biosynthesis begins with the synthesis of geranylgeranyl diphosphate (GGPP) by a yet unidentified GGPP synthase. Condensation of indole-3-glycerol phosphate with GGPP by the prenyltransferase terC then forms 3-geranylgeranylindole (3-GGI), followed by epoxidation and cyclization of this intermediate (by the FAD-dependent monooxygeanse terM and the terpene cyclase terB) to form paspaline. The cytochrome monooxygenase terQ then hydroxylates paspalline at C-11 to yield terpendole E. The cytochrome monooxygenase terP converts terpendole E to 13-desoxyterpendole I, and terQ converts 13-desoxyterpendole I into terpendole I. TerF and terK are required for conversion of terpendole I to terpendole C which is further converted to terpendole K. This is Cytochrome P450 monooxygeanse terK from Tolypocladium album (Soil fungus).